Here is a 67-residue protein sequence, read N- to C-terminus: UPF0434 protein Patl_1782 (67 aa).

It belongs to the UPF0434 family.

This chain is UPF0434 protein Patl_1782, found in Pseudoalteromonas atlantica (strain T6c / ATCC BAA-1087).